Consider the following 372-residue polypeptide: Probable inactive receptor-like protein kinase At1g65250 (372 aa).

ATP-binding positions include 1 to 4 (MGWL) and lysine 38. The Protein kinase domain maps to 1–314 (MGWLRKKKKP…QERCQMKAFL (314 aa)). 2 positions are modified to phosphotyrosine: tyrosine 128 and tyrosine 221. The disordered stretch occupies residues 348–372 (SSSLSSGQTQLDSAQDISSTVVLSN). Polar residues predominate over residues 354–372 (GQTQLDSAQDISSTVVLSN).

It belongs to the protein kinase superfamily.

The sequence is that of Probable inactive receptor-like protein kinase At1g65250 from Arabidopsis thaliana (Mouse-ear cress).